We begin with the raw amino-acid sequence, 430 residues long: UDP-N-acetylmuramoylalanine--D-glutamate ligase (430 aa).

ATP is bound at residue glycine 109–threonine 115.

This sequence belongs to the MurCDEF family.

It localises to the cytoplasm. The enzyme catalyses UDP-N-acetyl-alpha-D-muramoyl-L-alanine + D-glutamate + ATP = UDP-N-acetyl-alpha-D-muramoyl-L-alanyl-D-glutamate + ADP + phosphate + H(+). It functions in the pathway cell wall biogenesis; peptidoglycan biosynthesis. Functionally, cell wall formation. Catalyzes the addition of glutamate to the nucleotide precursor UDP-N-acetylmuramoyl-L-alanine (UMA). The sequence is that of UDP-N-acetylmuramoylalanine--D-glutamate ligase from Thermotoga sp. (strain RQ2).